A 205-amino-acid chain; its full sequence is Outer-membrane lipoprotein LolB (205 aa).

The signal sequence occupies residues 1–17; it reads MRLRLFLAASALALLSG. Cys18 is lipidated: N-palmitoyl cysteine. The S-diacylglycerol cysteine moiety is linked to residue Cys18.

This sequence belongs to the LolB family. Monomer.

Its subcellular location is the cell outer membrane. Its function is as follows. Plays a critical role in the incorporation of lipoproteins in the outer membrane after they are released by the LolA protein. The protein is Outer-membrane lipoprotein LolB of Pseudomonas paraeruginosa (strain DSM 24068 / PA7) (Pseudomonas aeruginosa (strain PA7)).